The primary structure comprises 65 residues: Large ribosomal subunit protein bL35 (65 aa).

A disordered region spans residues 1–26; it reads MPKIKTVRGAAKRFKKTASGGFKRKQ. A compositionally biased stretch (basic residues) spans 10 to 26; it reads AAKRFKKTASGGFKRKQ.

Belongs to the bacterial ribosomal protein bL35 family.

The sequence is that of Large ribosomal subunit protein bL35 from Actinobacillus succinogenes (strain ATCC 55618 / DSM 22257 / CCUG 43843 / 130Z).